The chain runs to 494 residues: Neuronal acetylcholine receptor subunit alpha-6 (494 aa).

The signal sequence occupies residues Met-1–Cys-31. Residues Glu-32–Pro-240 lie on the Extracellular side of the membrane. 2 N-linked (GlcNAc...) asparagine glycosylation sites follow: Asn-54 and Asn-171. Cys-158 and Cys-172 are disulfide-bonded. A run of 3 helical transmembrane segments spans residues Met-241–Pro-265, Val-272–Thr-290, and Tyr-306–Ile-327. The Cytoplasmic portion of the chain corresponds to His-328–Arg-468. Residues Lys-364–Lys-390 form a disordered region. Residues Ile-366–Lys-390 are compositionally biased toward basic residues. The helical transmembrane segment at Val-469–Pro-489 threads the bilayer.

Belongs to the ligand-gated ion channel (TC 1.A.9) family. Acetylcholine receptor (TC 1.A.9.1) subfamily. Alpha-6/CHRNA6 sub-subfamily. As to quaternary structure, neuronal AChR is composed of two different types of subunits: alpha and non-alpha (beta). CHRNA6/alpha-6 subunit can be combined to CHRNB2/beta-2, CHRNA4/alpha-4 and CHRNB3/beta-3 to give rise to functional receptors. Heteropentamers containing CHRNB3 have an stoichiometry of (CHRNA6:CHRNB2)2:CHRNB3. Interacts with LYPD6.

It is found in the synaptic cell membrane. It carries out the reaction K(+)(in) = K(+)(out). The catalysed reaction is Na(+)(in) = Na(+)(out). It catalyses the reaction Ca(2+)(in) = Ca(2+)(out). Its activity is regulated as follows. Activated by a myriad of ligands such as acetylcholine, cytisine and nicotine. CHRNA6 nAChR activity is inhibited by the antagonists alpha-conotoxin MII and PIA, a small disulfide-constrained peptides from cone snails. Component of neuronal acetylcholine receptors (nAChRs) that function as pentameric, ligand-gated cation channels with high calcium permeability among other activities. nAChRs are excitatory neurotrasnmitter receptors formed by a collection of nAChR subunits known to mediate synaptic transmission in the nervous system and the neuromuscular junction. Each nAchR subunit confers differential attributes to channel properties, including activation, deactivation and desensitization kinetics, pH sensitivity, cation permeability, and binding to allosteric modulators. CHRNA6 forms pentameric channels with CHRNB2 and CHRNA4 that exhibit high sensitivity to ACh and nicotine and are predominantly expressed in only a few brain areas, including dopaminergic neurons, norepirephrine neurons and cells of the visual system. nAChrs containing CHRNA6 subunits mediate endogenous cholinergic modulation of dopamine and gamma-aminobutyric acid (GABA) release in response to nicotine at nerve terminals. Functionally, component of neuronal acetylcholine receptors (nAChRs) that function as pentameric, ligand-gated cation channels with high calcium permeability among other activities. nAChRs are excitatory neurotrasnmitter receptors formed by a collection of nAChR subunits known to mediate synaptic transmission in the nervous system and the neuromuscular junction. Each nAchR subunit confers differential attributes to channel properties, including activation, deactivation and desensitization kinetics, pH sensitivity, cation permeability, and binding to allosteric modulators. CHRNA6 forms pentameric channels with CHRNB2, CHRNB3 and CHRNA4 that exhibit high sensitivity to ACh and nicotine and are predominantly expressed in only a few brain areas, including dopaminergic neurons, norepirephrine neurons and cells of the visual system. nAChrs containing CHRNA6 subunits mediate endogenous cholinergic modulation of dopamine and gamma-aminobutyric acid (GABA) release in response to nicotine at nerve terminals. The polypeptide is Neuronal acetylcholine receptor subunit alpha-6 (CHRNA6) (Gallus gallus (Chicken)).